The sequence spans 450 residues: Tubulin alpha-3C chain (450 aa).

The short motif at 1–4 (MREC) is the MREC motif element. Position 11 (Gln-11) interacts with GTP. Lys-40 is subject to N6-acetyllysine. Positions 71, 140, 144, 145, 179, 206, and 228 each coordinate GTP. Glu-71 provides a ligand contact to Mg(2+). The active site involves Glu-254. At Tyr-282 the chain carries 3'-nitrotyrosine. Ser-439 carries the post-translational modification Phosphoserine. Position 450 is a 3'-nitrotyrosine (Tyr-450).

This sequence belongs to the tubulin family. Dimer of alpha and beta chains. A typical microtubule is a hollow water-filled tube with an outer diameter of 25 nm and an inner diameter of 15 nM. Alpha-beta heterodimers associate head-to-tail to form protofilaments running lengthwise along the microtubule wall with the beta-tubulin subunit facing the microtubule plus end conferring a structural polarity. Microtubules usually have 13 protofilaments but different protofilament numbers can be found in some organisms and specialized cells. Requires Mg(2+) as cofactor. In terms of processing, some glutamate residues at the C-terminus are polyglutamylated, resulting in polyglutamate chains on the gamma-carboxyl group. Polyglutamylation plays a key role in microtubule severing by spastin (SPAST). SPAST preferentially recognizes and acts on microtubules decorated with short polyglutamate tails: severing activity by SPAST increases as the number of glutamates per tubulin rises from one to eight, but decreases beyond this glutamylation threshold. Glutamylation is also involved in cilia motility. Some glutamate residues at the C-terminus are monoglycylated but not polyglycylated due to the absence of functional TTLL10 in human. Monoglycylation is mainly limited to tubulin incorporated into cilia and flagella axonemes, which is required for their stability and maintenance. Flagella glycylation controls sperm motility. Both polyglutamylation and monoglycylation can coexist on the same protein on adjacent residues, and lowering glycylation levels increases polyglutamylation, and reciprocally. Post-translationally, acetylation of alpha chains at Lys-40 is located inside the microtubule lumen. This modification has been correlated with increased microtubule stability, intracellular transport and ciliary assembly. In terms of processing, methylation of alpha chains at Lys-40 is found in mitotic microtubules and is required for normal mitosis and cytokinesis contributing to genomic stability. Nitration of Tyr-450 is irreversible and interferes with normal dynein intracellular distribution. Post-translationally, undergoes a tyrosination/detyrosination cycle, the cyclic removal and re-addition of a C-terminal tyrosine residue by the enzymes tubulin tyrosine carboxypeptidase (MATCAP1/KIAA0895L, VASH1 or VASH2) and tubulin tyrosine ligase (TTL), respectively. In terms of processing, tyrosination promotes microtubule interaction with CAP-Gly domain-containing proteins such as CLIP1, CLIP2 and DCTN1. Tyrosination regulates the initiation of dynein-dynactin motility via interaction with DCTN1, which brings the dynein-dynactin complex into contact with microtubules. In neurons, tyrosinated tubulins mediate the initiation of retrograde vesicle transport. Detyrosination is involved in metaphase plate congression by guiding chromosomes during mitosis: detyrosination promotes interaction with CENPE, promoting pole-proximal transport of chromosomes toward the equator. Detyrosination increases microtubules-dependent mechanotransduction in dystrophic cardiac and skeletal muscle. In cardiomyocytes, detyrosinated microtubules are required to resist to contractile compression during contraction: detyrosination promotes association with desmin (DES) at force-generating sarcomeres, leading to buckled microtubules and mechanical resistance to contraction. In terms of tissue distribution, expressed in testis.

The protein localises to the cytoplasm. Its subcellular location is the cytoskeleton. The enzyme catalyses GTP + H2O = GDP + phosphate + H(+). Functionally, tubulin is the major constituent of microtubules, a cylinder consisting of laterally associated linear protofilaments composed of alpha- and beta-tubulin heterodimers. Microtubules grow by the addition of GTP-tubulin dimers to the microtubule end, where a stabilizing cap forms. Below the cap, tubulin dimers are in GDP-bound state, owing to GTPase activity of alpha-tubulin. The protein is Tubulin alpha-3C chain (TUBA3C) of Homo sapiens (Human).